The chain runs to 502 residues: DEP domain-containing protein 7 (502 aa).

The DEP domain maps to 37–127; the sequence is LQTQVEVKKR…SSCSLYRFTT (91 aa).

Belongs to the DEPDC7 family.

The chain is DEP domain-containing protein 7 (DEPDC7) from Macaca fascicularis (Crab-eating macaque).